Consider the following 514-residue polypeptide: Prolyl 3,4-dihydroxylase OGFOD1 (514 aa).

The Fe2OG dioxygenase domain maps to 114 to 221; the sequence is GAVDCSCNIY…RVSISGWFHT (108 aa). Residues H132 and D134 each coordinate Fe cation. Y146 lines the 2-oxoglutarate pocket. H200 is a Fe cation binding site. R212 contacts 2-oxoglutarate.

Belongs to the TPA1 family. In terms of assembly, monomer and homodimer. Requires Fe(2+) as cofactor. L-ascorbate serves as cofactor.

It catalyses the reaction [ribosomal protein uS12]-L-proline + 2-oxoglutarate + O2 = [ribosomal protein uS12]-(3S)-3-hydroxy-L-proline + succinate + CO2. It carries out the reaction [ribosomal protein uS12]-(3S)-3-hydroxy-L-proline + 2-oxoglutarate + O2 = [ribosomal protein uS12]-(3S)-3,4-dihydroxy-L-proline + succinate + CO2. Prolyl 3,4-dihydroxylase that catalyzes 3,4-dihydroxylation of 'Pro-61' of small ribosomal subunit uS12 (RPS23), thereby regulating protein translation termination efficiency. This Ostreococcus tauri protein is Prolyl 3,4-dihydroxylase OGFOD1 (Ogd).